Consider the following 138-residue polypeptide: Augmin complex subunit msd1 (138 aa).

In terms of assembly, component of the augmin complex composed of dgt2, dgt3, dgt4, dgt5, dgt6, msd1, msd5 and wac. The complex interacts directly or indirectly with microtubules and is required for centrosome-independent generation of spindle microtubules.

The protein localises to the cytoplasm. Its subcellular location is the cytoskeleton. It is found in the spindle. Its function is as follows. As part of the augmin complex, plays a role in centrosome-independent generation of spindle microtubules. The complex is required for mitotic spindle assembly through its involvement in localizing gamma-tubulin to spindle microtubules. msd1 is required for microtubule nucleation from within the mitotic spindle and for localization of Grip71 to centrosomes and mitotic spindle. This chain is Augmin complex subunit msd1, found in Drosophila melanogaster (Fruit fly).